We begin with the raw amino-acid sequence, 244 residues long: MDFSVIIPARYASSRLPAKLLKDVHGKPLIQLTYENAINSGANRVIIATDDKRIETVANDFGALTCMTDEHHTSGTSRIAQVLEVLDIDNDEIIVNVQGDEPMLNPSVIDQVANNLATSSMQIATLCEQITNKEQYLDPNCVKVVFNKAGKALYFSRAAIPFFREAKDFDLKLCFKHVGIYAYRAWFIKQYLTMSKSSYEQVEKLEQLTVLNEGFDIHVAPACDGIGHGVDIQCDLDKVRKELN.

Belongs to the KdsB family.

Its subcellular location is the cytoplasm. It carries out the reaction 3-deoxy-alpha-D-manno-oct-2-ulosonate + CTP = CMP-3-deoxy-beta-D-manno-octulosonate + diphosphate. It functions in the pathway nucleotide-sugar biosynthesis; CMP-3-deoxy-D-manno-octulosonate biosynthesis; CMP-3-deoxy-D-manno-octulosonate from 3-deoxy-D-manno-octulosonate and CTP: step 1/1. The protein operates within bacterial outer membrane biogenesis; lipopolysaccharide biosynthesis. Activates KDO (a required 8-carbon sugar) for incorporation into bacterial lipopolysaccharide in Gram-negative bacteria. The sequence is that of 3-deoxy-manno-octulosonate cytidylyltransferase from Ruthia magnifica subsp. Calyptogena magnifica.